A 307-amino-acid polypeptide reads, in one-letter code: Mycothiol acetyltransferase (307 aa).

2 consecutive N-acetyltransferase domains span residues 12–152 (TRTD…APIP) and 160–307 (VTLR…YQRS). E43 lines the 1D-myo-inositol 2-(L-cysteinylamino)-2-deoxy-alpha-D-glucopyranoside pocket. 87-89 (LAV) lines the acetyl-CoA pocket. 1D-myo-inositol 2-(L-cysteinylamino)-2-deoxy-alpha-D-glucopyranoside contacts are provided by E187, K227, and E239. Acetyl-CoA-binding positions include 243–245 (LGV) and 250–256 (HGGGLGK). Position 278 (Y278) interacts with 1D-myo-inositol 2-(L-cysteinylamino)-2-deoxy-alpha-D-glucopyranoside.

Belongs to the acetyltransferase family. MshD subfamily. As to quaternary structure, monomer.

It carries out the reaction 1D-myo-inositol 2-(L-cysteinylamino)-2-deoxy-alpha-D-glucopyranoside + acetyl-CoA = mycothiol + CoA + H(+). Functionally, catalyzes the transfer of acetyl from acetyl-CoA to desacetylmycothiol (Cys-GlcN-Ins) to form mycothiol. In Salinispora arenicola (strain CNS-205), this protein is Mycothiol acetyltransferase.